A 437-amino-acid chain; its full sequence is Chloride intracellular channel protein 5 (437 aa).

Over residues 1 to 14 (MNDENYSTTIYNRV) the composition is skewed to polar residues. A disordered region spans residues 1–197 (MNDENYSTTI…VSEGNESASA (197 aa)). Residues 34-45 (DEVHEDVRREDN) are compositionally biased toward basic and acidic residues. 4 consecutive repeat copies span residues 118 to 125 (QSDSEEPQ), 126 to 133 (ASDPEEPQ), 134 to 141 (ASDPEEPQ), and 142 to 149 (GPDPEEPQ). The tract at residues 118–149 (QSDSEEPQASDPEEPQASDPEEPQGPDPEEPQ) is 4 X 8 AA tandem repeats of [AGQ]-[SP]-D-[PS]-E-E-P-Q. Residues 121-157 (SEEPQASDPEEPQASDPEEPQGPDPEEPQENGNEMEA) show a composition bias toward acidic residues. Polar residues predominate over residues 161-184 (SPSSFTIQNSRAFSTREISPTSYS). Positions 217 to 220 (CPFS) match the G-site motif. A helical transmembrane segment spans residues 219–239 (FSQRLFMILWLKGVVFNVTTV). Residues 263–427 (NGDVKTDVNK…AADSEIELAY (165 aa)) enclose the GST C-terminal domain.

It belongs to the chloride channel CLIC family. Component of a multimeric complex consisting of several cytoskeletal proteins, including actin, ezrin, alpha-actinin, gelsolin, and IQGAP1. Interacts with AKAP9. Interacts with TPRN. TPRN, CLIC5 and PTPQR form concentric rings at the base of stereocilia and may form a complex. Interacts with EZR, MYO6 and RDX; the proteins may work together as a complex to stabilize linkages between the plasma membrane and subjacent actin cytoskeleton at the stereocilium base. Post-translationally, phosphorylated. Expressed in most tissues. Higher levels found in kidney, heart, skeletal muscle, T84 and PANC-1 cells.

The protein localises to the golgi apparatus. Its subcellular location is the cytoplasm. It localises to the cytoskeleton. It is found in the microtubule organizing center. The protein resides in the centrosome. The protein localises to the cell cortex. Its subcellular location is the membrane. It localises to the apical cell membrane. It is found in the mitochondrion. The protein resides in the cell projection. The protein localises to the stereocilium. It catalyses the reaction Na(+)(in) = Na(+)(out). The catalysed reaction is K(+)(in) = K(+)(out). It carries out the reaction chloride(in) = chloride(out). With respect to regulation, inhibited by F-actin. In the soluble state, catalyzes glutaredoxin-like thiol disulfide exchange reactions with reduced glutathione as electron donor. Can insert into membranes and form non-selective ion channels almost equally permeable to Na(+), K(+) and Cl(-). Required for normal hearing. It is necessary for the formation of stereocilia in the inner ear and normal development of the organ of Corti. May play a role in the regulation of transepithelial ion absorption and secretion. Is required for the development and/or maintenance of the proper glomerular endothelial cell and podocyte architecture. Plays a role in formation of the lens suture in the eye, which is important for normal optical properties of the lens. The sequence is that of Chloride intracellular channel protein 5 (CLIC5) from Bos taurus (Bovine).